Here is a 119-residue protein sequence, read N- to C-terminus: MSINKNIARLRRAKSTRAHIRELGVARLSVLRTGQHLYAQVFTADGSKVIAAANTLQADVKDGLKNGKNSDAAAKVGKLIAERAKAAGIEKVAFDRSGYRYHGRIKALADAAREGGLQF.

The protein belongs to the universal ribosomal protein uL18 family. In terms of assembly, part of the 50S ribosomal subunit; part of the 5S rRNA/L5/L18/L25 subcomplex. Contacts the 5S and 23S rRNAs.

Its function is as follows. This is one of the proteins that bind and probably mediate the attachment of the 5S RNA into the large ribosomal subunit, where it forms part of the central protuberance. This is Large ribosomal subunit protein uL18 from Xanthomonas axonopodis pv. citri (strain 306).